The primary structure comprises 727 residues: Polyphosphate kinase (727 aa).

Residue Asn-82 participates in ATP binding. The Mg(2+) site is built by Arg-412 and Arg-442. The Phosphohistidine intermediate role is filled by His-472. 3 residues coordinate ATP: Tyr-505, Arg-601, and His-629.

The protein belongs to the polyphosphate kinase 1 (PPK1) family. Mg(2+) serves as cofactor. Post-translationally, an intermediate of this reaction is the autophosphorylated ppk in which a phosphate is covalently linked to a histidine residue through a N-P bond.

It catalyses the reaction [phosphate](n) + ATP = [phosphate](n+1) + ADP. In terms of biological role, catalyzes the reversible transfer of the terminal phosphate of ATP to form a long-chain polyphosphate (polyP). The chain is Polyphosphate kinase from Pseudomonas putida (strain ATCC 47054 / DSM 6125 / CFBP 8728 / NCIMB 11950 / KT2440).